We begin with the raw amino-acid sequence, 76 residues long: Exodeoxyribonuclease 7 small subunit (76 aa).

The protein belongs to the XseB family. In terms of assembly, heterooligomer composed of large and small subunits.

It is found in the cytoplasm. The catalysed reaction is Exonucleolytic cleavage in either 5'- to 3'- or 3'- to 5'-direction to yield nucleoside 5'-phosphates.. Bidirectionally degrades single-stranded DNA into large acid-insoluble oligonucleotides, which are then degraded further into small acid-soluble oligonucleotides. The chain is Exodeoxyribonuclease 7 small subunit from Staphylococcus aureus (strain MRSA252).